A 548-amino-acid chain; its full sequence is MAAKDVKFGNDARVKMLRGVNVLADAVKVTLGPKGRNVVLDKSFGAPNITKDGVSVAREIELEDKFENMGAQMVKEVASKANDAAGDGTTTATVLAQSIITEGLKAVAAGMNPMDLKRGIDKAVAAAVEELKALSVPCSDSKAIAQVGTISANSDETVGKLIAEAMDKVGKEGVITVEDGTGLQDELDVVEGMQFDRGYLSPYFINKPETGAVELESPFILLADKKISNIREMLPVLEAVAKAGKPLLIIAEDVEGEALATLVVNTMRGIVKVAAVKAPGFGDRRKAMLQDIATLTGGTVISEEIGMELEKATLEDLGQAKRVVINKDTTTIIDGVGEEAAIQGRVAQIRQQIEEATSDYDREKLQERVAKLAGGVAVIKVGAATEVEMKEKKARVEDALHATRAAVEEGVVAGGGVALIRVASKIADLKGQNEDQNVGIKVALRAMEAPLRQIVLNCGEEPSVVANTVKGGDGNYGYNAATEEYGNMIDMGILDPTKVTRSALQYAASVAGLMITTECMVTDLPKSDAPDLGAAGGMGGMGGMGGMM.

ATP contacts are provided by residues 30–33 (TLGP), Lys-51, 87–91 (DGTTT), Gly-415, 479–481 (NAA), and Asp-495.

This sequence belongs to the chaperonin (HSP60) family. Forms a cylinder of 14 subunits composed of two heptameric rings stacked back-to-back. Interacts with the co-chaperonin GroES.

The protein localises to the cytoplasm. The catalysed reaction is ATP + H2O + a folded polypeptide = ADP + phosphate + an unfolded polypeptide.. Functionally, together with its co-chaperonin GroES, plays an essential role in assisting protein folding. The GroEL-GroES system forms a nano-cage that allows encapsulation of the non-native substrate proteins and provides a physical environment optimized to promote and accelerate protein folding. The protein is Chaperonin GroEL of Salmonella arizonae (strain ATCC BAA-731 / CDC346-86 / RSK2980).